Here is a 264-residue protein sequence, read N- to C-terminus: ORC1-type DNA replication protein 2 (264 aa).

ATP-binding positions include 73–77, Tyr-220, and Arg-232; that span reads TGKSL.

Belongs to the CDC6/cdc18 family.

In terms of biological role, involved in regulation of DNA replication. This is ORC1-type DNA replication protein 2 (orc2) from Halobacterium salinarum (strain ATCC 700922 / JCM 11081 / NRC-1) (Halobacterium halobium).